We begin with the raw amino-acid sequence, 412 residues long: Putative F-box protein At3g22940 (412 aa).

In terms of domain architecture, F-box spans 1–38; it reads MPLEEILSRLPLKSTRAVRSTCKKWDSLFKNRSFISKA.

The chain is Putative F-box protein At3g22940 from Arabidopsis thaliana (Mouse-ear cress).